The following is a 497-amino-acid chain: Amino acid oxidase fsqB (497 aa).

Residues V14, F15, D38, N53, A57, N58, R63, V64, and V211 each contribute to the FAD site. C414 is subject to S-8alpha-FAD cysteine. Residues F447 and K448 each contribute to the FAD site.

It belongs to the MSOX/MTOX family. Dimer. FAD serves as cofactor.

It carries out the reaction (2S,4S,5S)-2-amino-6-(3,4-dihydroxyphenyl)-4-hydroxy-5-(methylamino)hexanoyl-[peptidyl-carrier protein] + O2 = (2S,4S)-2-amino-4-[(3S)-7,8-dihydroxy-1,2,3,4-tetrahydroisoquinolin-3-yl]-4-hydroxybutanoyl-[peptidyl-carrier protein] + H2O2. It catalyses the reaction N-methyl-L-dopa + O2 = (3S)-7,8-dihydroxy-1,2,3,4-tetrahydroisoquinoline-3-carboxylate + H2O2. The enzyme catalyses N-methyl-D-dopa + O2 = (3R)-7,8-dihydroxy-1,2,3,4-tetrahydroisoquinoline-3-carboxylate + H2O2. The protein operates within secondary metabolite biosynthesis. Functionally, amino acid oxidase; part of the gene cluster that mediates the biosynthesis of the isoquinoline alkaloids fumisoquin A, fumisoquin B and fumisoquin C; as well as small amounts of fumipyrrole as a shunt metabolite. The products of the cluster lead to a brown coloration and are important for growth and conidiation. The nonribosomal peptide synthetase-like protein fsqF, which lacks a canonical condensation domain, is required for addition of a serine-derived dehydroalanine moiety to activated tyrosine but is not essential for the subsequent steps leading to isoquinoline formation. A different enzyme, most likely the ATP-grasp enzyme fsqD, is responsible for activation of tyrosine. Three additional enzymes encoded by the fsq cluster, the N-methyltransferase fsqC, the phenol 2-monooxygenase fsqG and the FAD-dependent oxidase fsqB, catalyze the formation of the isoquinoline ring system in the fumisoquins. FsqB converts the fspF thiolation domain-bound (2S,4S,5S)-2-amino-6-(3,4-dihydroxyphenyl)-4-hydroxy-5-(methylamino)hexanoyl into isoquinoline. The cyclization most likely proceeds via a two-step mechanism, beginning with FAD-dependent oxidation of the methyl group to an iminium species followed by electrophilic attack on the deprotonated phenol. In terms of biological role, is able to convert N-methyl-3,4-dihydroxy-DL-phenylalanine (N-methyl-DOPA) directly into cyclic isoquinoline, in vitro. The absence of the meta-hydroxyl group, as in L-N-methyl-tyrosine, leads to a 25-fold lower rate of reduction and the formation of the demethylated product L-tyrosine, instead of a cyclic product. Does not accept the D-stereoisomer of N-methyltyrosine, in contrast to N-methyl-DOPA, for which both stereoisomers are oxidized with similar rates. This Aspergillus fumigatus (strain ATCC MYA-4609 / CBS 101355 / FGSC A1100 / Af293) (Neosartorya fumigata) protein is Amino acid oxidase fsqB.